The following is a 477-amino-acid chain: Aspartyl/glutamyl-tRNA(Asn/Gln) amidotransferase subunit B (477 aa).

This sequence belongs to the GatB/GatE family. GatB subfamily. In terms of assembly, heterotrimer of A, B and C subunits.

The enzyme catalyses L-glutamyl-tRNA(Gln) + L-glutamine + ATP + H2O = L-glutaminyl-tRNA(Gln) + L-glutamate + ADP + phosphate + H(+). The catalysed reaction is L-aspartyl-tRNA(Asn) + L-glutamine + ATP + H2O = L-asparaginyl-tRNA(Asn) + L-glutamate + ADP + phosphate + 2 H(+). In terms of biological role, allows the formation of correctly charged Asn-tRNA(Asn) or Gln-tRNA(Gln) through the transamidation of misacylated Asp-tRNA(Asn) or Glu-tRNA(Gln) in organisms which lack either or both of asparaginyl-tRNA or glutaminyl-tRNA synthetases. The reaction takes place in the presence of glutamine and ATP through an activated phospho-Asp-tRNA(Asn) or phospho-Glu-tRNA(Gln). This Lactococcus lactis subsp. cremoris (strain MG1363) protein is Aspartyl/glutamyl-tRNA(Asn/Gln) amidotransferase subunit B.